Consider the following 98-residue polypeptide: Integration host factor subunit alpha (98 aa).

It belongs to the bacterial histone-like protein family. In terms of assembly, heterodimer of an alpha and a beta chain.

Functionally, this protein is one of the two subunits of integration host factor, a specific DNA-binding protein that functions in genetic recombination as well as in transcriptional and translational control. This Idiomarina loihiensis (strain ATCC BAA-735 / DSM 15497 / L2-TR) protein is Integration host factor subunit alpha.